Reading from the N-terminus, the 89-residue chain is Small ribosomal subunit protein uS15 (89 aa).

It belongs to the universal ribosomal protein uS15 family. In terms of assembly, part of the 30S ribosomal subunit. Forms a bridge to the 50S subunit in the 70S ribosome, contacting the 23S rRNA.

Its function is as follows. One of the primary rRNA binding proteins, it binds directly to 16S rRNA where it helps nucleate assembly of the platform of the 30S subunit by binding and bridging several RNA helices of the 16S rRNA. In terms of biological role, forms an intersubunit bridge (bridge B4) with the 23S rRNA of the 50S subunit in the ribosome. The polypeptide is Small ribosomal subunit protein uS15 (Streptococcus equi subsp. zooepidemicus (strain H70)).